We begin with the raw amino-acid sequence, 213 residues long: Kynurenine formamidase (213 aa).

Trp18 contributes to the substrate binding site. 3 residues coordinate Zn(2+): His48, His52, and Asp54. The Proton donor/acceptor role is filled by His58. Zn(2+) is bound by residues His160 and Glu172.

It belongs to the Cyclase 1 superfamily. KynB family. In terms of assembly, homodimer. It depends on Zn(2+) as a cofactor.

The catalysed reaction is N-formyl-L-kynurenine + H2O = L-kynurenine + formate + H(+). The protein operates within amino-acid degradation; L-tryptophan degradation via kynurenine pathway; L-kynurenine from L-tryptophan: step 2/2. Catalyzes the hydrolysis of N-formyl-L-kynurenine to L-kynurenine, the second step in the kynurenine pathway of tryptophan degradation. The sequence is that of Kynurenine formamidase from Burkholderia ambifaria (strain MC40-6).